We begin with the raw amino-acid sequence, 531 residues long: CTP synthase (531 aa).

Positions 1–267 are amidoligase domain; the sequence is MTKYIIITGG…ASKILSKLNL (267 aa). Position 13 (S13) interacts with CTP. S13 is a UTP binding site. Position 14-19 (14-19) interacts with ATP; that stretch reads SVGKGT. Y54 contacts L-glutamine. D71 is an ATP binding site. The Mg(2+) site is built by D71 and E141. Residues 148–150, 188–193, and K224 each bind CTP; these read DIE and KTKPLQ. UTP contacts are provided by residues 188 to 193 and K224; that span reads KTKPLQ. The Glutamine amidotransferase type-1 domain maps to 292–531; sequence KIALVGKYTK…IGFLRAAAGV (240 aa). Residue G355 coordinates L-glutamine. C382 serves as the catalytic Nucleophile; for glutamine hydrolysis. L-glutamine is bound by residues 383 to 386, E406, and R463; that span reads YGMQ. Residues H507 and E509 contribute to the active site.

This sequence belongs to the CTP synthase family. In terms of assembly, homotetramer.

The enzyme catalyses UTP + L-glutamine + ATP + H2O = CTP + L-glutamate + ADP + phosphate + 2 H(+). It carries out the reaction L-glutamine + H2O = L-glutamate + NH4(+). The catalysed reaction is UTP + NH4(+) + ATP = CTP + ADP + phosphate + 2 H(+). It participates in pyrimidine metabolism; CTP biosynthesis via de novo pathway; CTP from UDP: step 2/2. Its activity is regulated as follows. Allosterically activated by GTP, when glutamine is the substrate; GTP has no effect on the reaction when ammonia is the substrate. The allosteric effector GTP functions by stabilizing the protein conformation that binds the tetrahedral intermediate(s) formed during glutamine hydrolysis. Inhibited by the product CTP, via allosteric rather than competitive inhibition. Catalyzes the ATP-dependent amination of UTP to CTP with either L-glutamine or ammonia as the source of nitrogen. Regulates intracellular CTP levels through interactions with the four ribonucleotide triphosphates. The polypeptide is CTP synthase (Sulfurisphaera tokodaii (strain DSM 16993 / JCM 10545 / NBRC 100140 / 7) (Sulfolobus tokodaii)).